The chain runs to 155 residues: Transcriptional repressor NrdR (155 aa).

Residues Cys3–Cys34 fold into a zinc finger. In terms of domain architecture, ATP-cone spans Leu49–Asp139.

The protein belongs to the NrdR family. Requires Zn(2+) as cofactor.

Negatively regulates transcription of bacterial ribonucleotide reductase nrd genes and operons by binding to NrdR-boxes. The sequence is that of Transcriptional repressor NrdR from Roseobacter denitrificans (strain ATCC 33942 / OCh 114) (Erythrobacter sp. (strain OCh 114)).